The sequence spans 269 residues: Tryptophan synthase alpha chain (269 aa).

Catalysis depends on proton acceptor residues glutamate 49 and aspartate 60.

It belongs to the TrpA family. Tetramer of two alpha and two beta chains.

The enzyme catalyses (1S,2R)-1-C-(indol-3-yl)glycerol 3-phosphate + L-serine = D-glyceraldehyde 3-phosphate + L-tryptophan + H2O. It functions in the pathway amino-acid biosynthesis; L-tryptophan biosynthesis; L-tryptophan from chorismate: step 5/5. In terms of biological role, the alpha subunit is responsible for the aldol cleavage of indoleglycerol phosphate to indole and glyceraldehyde 3-phosphate. This Delftia acidovorans (strain DSM 14801 / SPH-1) protein is Tryptophan synthase alpha chain.